The sequence spans 101 residues: Trp operon repressor homolog (101 aa).

The DNA-binding element occupies 59-82 (QREIAQKYGVSIAQITRGSNALKA).

The protein belongs to the TrpR family. As to quaternary structure, homodimer.

It localises to the cytoplasm. This protein is an aporepressor. When complexed with L-tryptophan it binds the operator region of the trp operon and prevents the initiation of transcription. This chain is Trp operon repressor homolog, found in Chlamydia caviae (strain ATCC VR-813 / DSM 19441 / 03DC25 / GPIC) (Chlamydophila caviae).